We begin with the raw amino-acid sequence, 545 residues long: Threonine--tRNA ligase catalytic subunit (545 aa).

A catalytic region spans residues 139–433 (DHRLIGEKLD…LLEHFKGKLP (295 aa)). Cys-231, His-282, and His-410 together coordinate Zn(2+).

Belongs to the class-II aminoacyl-tRNA synthetase family. Homodimer. Probably interacts with its editing subunit. Zn(2+) is required as a cofactor.

The protein localises to the cytoplasm. It carries out the reaction tRNA(Thr) + L-threonine + ATP = L-threonyl-tRNA(Thr) + AMP + diphosphate + H(+). Catalyzes the attachment of threonine to tRNA(Thr) in a two-step reaction: L-threonine is first activated by ATP to form Thr-AMP and then transferred to the acceptor end of tRNA(Thr). Also activates L-serine and transfers it to tRNA(Thr) but cannot deacylate incorrectly charged amino acid; unlike most archaea the editing function is found in a freestanding protein. This chain is Threonine--tRNA ligase catalytic subunit, found in Saccharolobus islandicus (strain L.S.2.15 / Lassen #1) (Sulfolobus islandicus).